We begin with the raw amino-acid sequence, 246 residues long: Probable transcriptional regulatory protein GWCH70_2524 (246 aa).

Belongs to the TACO1 family.

It localises to the cytoplasm. The sequence is that of Probable transcriptional regulatory protein GWCH70_2524 from Geobacillus sp. (strain WCH70).